Reading from the N-terminus, the 411-residue chain is Proline-responsive transcriptional activator PutR (411 aa).

This sequence belongs to the CdaR family.

Activates transcription of the putBCP operon. Requires proline as a coactivator. The sequence is that of Proline-responsive transcriptional activator PutR from Bacillus subtilis (strain 168).